A 427-amino-acid polypeptide reads, in one-letter code: Serine/arginine (SR)-type shuttling mRNA binding protein GBP2 (427 aa).

The interval 1–101 (MERELGMYGN…GRGGGRGRTL (101 aa)) is disordered. Positions 22 to 32 (RLSDDRDRYDD) are enriched in basic and acidic residues. At serine 24 the chain carries Phosphoserine. A compositionally biased stretch (low complexity) spans 35–44 (DSSSNNGNGS). A compositionally biased stretch (basic and acidic residues) spans 50–60 (DRGSRFNDRYD). RRM domains are found at residues 122-198 (NSIF…QDNP) and 219-296 (FEVF…EGRF). Threonine 130 bears the Phosphothreonine mark. Residues 300–317 (KNNDRYNQRREDLEDTRG) show a composition bias toward basic and acidic residues. The tract at residues 300–319 (KNNDRYNQRREDLEDTRGTE) is disordered. Residues 349–426 (CFIYCSNLPF…CSLQISYARR (78 aa)) form the RRM 3 domain.

Post-translationally, methylated by HMT1.

The protein localises to the cytoplasm. It localises to the nucleus. The protein resides in the chromosome. It is found in the telomere. Its subcellular location is the P-body. The protein localises to the stress granule. In terms of biological role, binds to intron-containing transcripts and is involved in quality control for the export of spliced mRNAs from the nucleus. Binds to pre-mRNAs until splicing is completed or until faulty mRNAs are degraded. On correctly spliced mRNAs, GBP2 and HRB1 recruit MEX67 to allow nuclear export. On faulty mRNAs, GBP2 and HRB1 associate with the TRAMP complex that guides those pre-mRNAs to the exosome for degradation. Binds single-stranded telomeric sequences of the type (TG[1-3])n in vitro. Influences the localization of RAP1 in the nuclei. Involved in modulating telomere length. This is Serine/arginine (SR)-type shuttling mRNA binding protein GBP2 from Saccharomyces cerevisiae (strain ATCC 204508 / S288c) (Baker's yeast).